The following is a 72-amino-acid chain: Small, acid-soluble spore protein 1 (72 aa).

The protein belongs to the alpha/beta-type SASP family.

In terms of biological role, SASP are bound to spore DNA. They are double-stranded DNA-binding proteins that cause DNA to change to an a-like conformation. They protect the DNA backbone from chemical and enzymatic cleavage and are thus involved in dormant spore's high resistance to UV light. The chain is Small, acid-soluble spore protein 1 (Sh-1) from Halobacillus halophilus (strain ATCC 35676 / DSM 2266 / JCM 20832 / KCTC 3685 / LMG 17431 / NBRC 102448 / NCIMB 2269) (Sporosarcina halophila).